We begin with the raw amino-acid sequence, 207 residues long: Large ribosomal subunit protein uL3 (207 aa).

Residues 126–149 (GPASHGSKKWHRRPGSIGQRKTPG) form a disordered region.

It belongs to the universal ribosomal protein uL3 family. In terms of assembly, part of the 50S ribosomal subunit. Forms a cluster with proteins L14 and L19.

Its function is as follows. One of the primary rRNA binding proteins, it binds directly near the 3'-end of the 23S rRNA, where it nucleates assembly of the 50S subunit. The sequence is that of Large ribosomal subunit protein uL3 from Deinococcus geothermalis (strain DSM 11300 / CIP 105573 / AG-3a).